An 847-amino-acid polypeptide reads, in one-letter code: Receptor-like protein 12 (847 aa).

The N-terminal stretch at 1–27 (MMIRSHRHWVFSSRIIIFLSLLVHSLA) is a signal peptide. At 28-798 (SSSPHFCRDD…LSEAEENMFN (771 aa)) the chain is on the extracellular side. N52, N66, N103, and N132 each carry an N-linked (GlcNAc...) asparagine glycan. 25 LRR repeats span residues 109 to 133 (LQYL…LGNL), 135 to 157 (HLTL…IGNL), 158 to 181 (NQLR…LGNL), 183 to 205 (RLVN…IGDL), 206 to 229 (KQLR…LGNL), 231 to 253 (NLVH…IGNL), 254 to 277 (IELR…FANL), 279 to 301 (KLSI…MSIF), 302 to 325 (HNLE…LLLI), 326 to 350 (PSLE…TSSS), 351 to 374 (TKLQ…ISRL), 375 to 398 (LNLE…ISKL), 400 to 422 (NLLH…LWRL), 424 to 442 (TMVL…SQEE), 443 to 466 (ALIE…ICKL), 467 to 491 (SSLG…RNFS), 492 to 514 (GSIK…IFSK), 516 to 539 (TELV…LINC), 541 to 562 (ALEL…WLES), 563 to 587 (LPSL…HASI), 589 to 613 (FQSL…YFSN), 657 to 681 (RRDF…LGYL), 682 to 704 (KELR…FLAN), 705 to 729 (LTKL…LAAL), and 731 to 754 (FLSY…QFQR). The N-linked (GlcNAc...) asparagine glycan is linked to N180. Residues N210 and N228 are each glycosylated (N-linked (GlcNAc...) asparagine). Residues N263, N276, and N289 are each glycosylated (N-linked (GlcNAc...) asparagine). Residue N346 is glycosylated (N-linked (GlcNAc...) asparagine). An N-linked (GlcNAc...) asparagine glycan is attached at N386. N437 carries an N-linked (GlcNAc...) asparagine glycan. N489 and N503 each carry an N-linked (GlcNAc...) asparagine glycan. N601 carries N-linked (GlcNAc...) asparagine glycosylation. N-linked (GlcNAc...) asparagine glycans are attached at residues N688 and N704. An N-linked (GlcNAc...) asparagine glycan is attached at N736. A helical transmembrane segment spans residues 799–819 (WVAAAIAYGPGVLCGLVIGHF). Over 820-847 (YTSHNHEWFTEKFGRKQHKALTSVKCSL) the chain is Cytoplasmic.

This sequence belongs to the RLP family.

The protein localises to the cell membrane. Involved in the perception of CLV3 and CLV3-like peptides, that act as extracellular signals regulating meristems maintenance. The chain is Receptor-like protein 12 from Arabidopsis thaliana (Mouse-ear cress).